We begin with the raw amino-acid sequence, 109 residues long: Parvalbumin alpha (109 aa).

2 EF-hand domains span residues 38-73 (KTDA…FSAH) and 77-109 (LNDT…VAQA). Residues aspartate 51, aspartate 53, serine 55, glutamate 62, aspartate 90, aspartate 92, aspartate 94, lysine 96, and glutamate 101 each contribute to the Ca(2+) site.

It belongs to the parvalbumin family.

In muscle, parvalbumin is thought to be involved in relaxation after contraction. It binds two calcium ions. This is Parvalbumin alpha from Triakis semifasciata (Leopard shark).